We begin with the raw amino-acid sequence, 181 residues long: Protein CRABS CLAW (181 aa).

A C4-type zinc finger spans residues 26–53; the sequence is CSICNTILAVGIPLKRMLDTVTVKCGHC. Residues 80–122 are disordered; that stretch reads GSDYKKGSSSSSSSSTSSDQPPSPSPPFVVKPPEKKQRLPSAY. Residues 87–99 show a composition bias toward low complexity; the sequence is SSSSSSSSTSSDQ. Over residues 100 to 109 the composition is skewed to pro residues; the sequence is PPSPSPPFVV.

Belongs to the YABBY family. In terms of tissue distribution, restricted to flowers, mostly in carpels and nectaries. Expressed at low levels in sepal primordia (buds), sepal receptacle and developing petal. Not detected in placental tissues, septum, stigma and ovules.

Its subcellular location is the nucleus. In terms of biological role, transcription factor required for the initiation of nectary development. Also involved in suppressing early radial growth of the gynoecium, in promoting its later elongation and in fusion of its carpels by regulating both cell division and expansion. Establishes the polar differentiation in the carpels by specifying abaxial cell fate in the ovary wall. Regulates both cell division and expansion. This Arabidopsis thaliana (Mouse-ear cress) protein is Protein CRABS CLAW.